The sequence spans 754 residues: FAD-dependent monooxygenase ntnA (754 aa).

A helical membrane pass occupies residues 3–23; the sequence is IPFKVLIIGGGVAGLTLAIML. FAD is bound by residues Glu34, Gly48, and Arg109. The active site involves Tyr218. 2 residues coordinate FAD: Asp311 and Ala324. 4 helical membrane-spanning segments follow: residues 446–466, 486–506, 536–556, and 563–583; these read PLAT…PWLA, AEVL…MWVI, ILPI…YYYM, and LGVA…SAVC. The N-linked (GlcNAc...) asparagine glycan is linked to Asn586. The chain crosses the membrane as a helical span at residues 595-615; sequence SWWFTADFAFPVVAYLSGMFL. The N-linked (GlcNAc...) asparagine glycan is linked to Asn616. The next 2 helical transmembrane spans lie at 644–664 and 679–697; these read IAFV…TTIL and LASL…AWEL. The N-linked (GlcNAc...) asparagine glycan is linked to Asn701. The chain crosses the membrane as a helical span at residues 712-732; it reads LTILSSTIFGGPAATLAGTFI.

The protein belongs to the paxM FAD-dependent monooxygenase family. FAD is required as a cofactor.

The protein localises to the membrane. The protein operates within secondary metabolite biosynthesis; terpenoid biosynthesis. Its function is as follows. FAD-dependent monooxygenase; part of the gene cluster that mediates the biosynthesis of the meroterpenoids nectripenoids A and B, as well as cochliquninone D and isocochliquninone E. The pathway probably begins with the HR-PKS ntnH that catalyzes two chain-extension steps to form a reduced triketide, which then primes the SAT domain in the NR-PKS ntnG to initiate three more cycles of extension to give a linear hexaketide corresponding to the polyketide part of nectripenoids. The FAD-dependent monooxygenase ntnJ then performs an oxidative decarboxylation at C11 of the ntnH/ntnG product, via an electrophilic aromatic hydroxylation with concomitant ipso-decarboxylation. The membrane-bound polyprenyl transferase ntnF then introduces a farnesyl group before the FAD-dependent monooxygenase ntnK functions as the first epoxidase on terminal C12'-C13' olefin, followed by a second epoxidation on C7'-C8' catalyzed by ntnA. The terpene cyclase/mutase ntnI then initiates the sequential tricyclic ring formation through protonation of the terminal epoxide and catalyzes the regioselective and stereoselective 6/6/6-tricyclic ring formation. The cytochrome P450 monooxygenase ntnM may then hydroxylate C1'. The chain is FAD-dependent monooxygenase ntnA from Nectria sp.